Reading from the N-terminus, the 451-residue chain is Protoheme IX farnesyltransferase, mitochondrial (451 aa).

6 helical membrane passes run 149–169 (TILVMLSAICSYALSPYPATV), 240–260 (PTVAALGLSNIALYSWIYTSL), 265–285 (IINTWVGALVGAIPPLMGWAA), 289–309 (LTHPGSWCLAGLLYAWQFPHF), 339–359 (VALRYSLLMFPLCFGLSYFNI), and 414–434 (KAFFASVLHLPAVLILAILHK).

The protein belongs to the UbiA prenyltransferase family.

Its subcellular location is the mitochondrion membrane. Converts protoheme IX and farnesyl diphosphate to heme O. In Candida glabrata (strain ATCC 2001 / BCRC 20586 / JCM 3761 / NBRC 0622 / NRRL Y-65 / CBS 138) (Yeast), this protein is Protoheme IX farnesyltransferase, mitochondrial (COX10).